The sequence spans 842 residues: MVAFTVDQMRSLMDKVTNVRNMSVIAHVDHGKSTLTDSLVQRAGIISAAKAGEARFTDTRKDEQERGITIKSTAISLYSEMSDEDVKEIKQKTDGNSFLINLIDSPGHVDFSSEVTAALRVTDGALVVVDTIEGVCVQTETVLRQALGERIKPVVVINKVDRALLELQVSKEDLYQTFARTVESVNVIVSTYADEVLGDVQVYPARGTVAFGSGLHGWAFTIRQFATRYAKKFGVDKAKMMDRLWGDSFFNPKTKKWTNKDTDAEGKPLERAFNMFILDPIFRLFTAIMNFKKDEIPVLLEKLEIVLKGDEKDLEGKALLKVVMRKFLPAADALLEMIVLHLPSPVTAQAYRAEQLYEGPADDANCIAIKNCDPKADLMLYVSKMVPTSDKGRFYAFGRVFAGTVKSGQKVRIQGPNYVPGKKDDLFIKAIQRVVLMMGRFVEPIDDCPAGNIIGLVGIDQFLLKTGTLTTSETAHNMKVMKFSVSPVVQVAVEVKNANDLPKLVEGLKRLSKSDPCVLTYMSESGEHIVAGTGELHLEICLQDLEHDHAGVPLKISPPVVAYRETVESESSQTALSKSPNKHNRIYLKAEPIDEEVSLAIENGIINPRDDFKARARIMADDYGWDVTDARKIWCFGPDGNGPNLVIDQTKAVQYLHEIKDSVVAAFQWATKEGPIFGEEMRSVRVNILDVTLHADAIHRGGGQIIPTMRRATYAGFLLADPKIQEPVFLVEIQCPEQAVGGIYSVLNKKRGQVVSEEQRPGTPLFTVKAYLPVNESFGFTGELRQATGGQAFPQMVFDHWSTLGSDPLDPTSKAGEIVLAARKRHGMKEEVPGWQEYYDKL.

Residues 17-346 form the tr-type G domain; the sequence is TNVRNMSVIA…MIVLHLPSPV (330 aa). GTP-binding positions include 26-33, 158-161, and 213-215; these read AHVDHGKS, NKVD, and SGL. The residue at position 509 (K509) is an N6,N6,N6-trimethyllysine; by EFM3; alternate. K509 bears the N6,N6-dimethyllysine; by EFM3; alternate mark. At K509 the chain carries N6-methyllysine; by EFM3; alternate. The residue at position 579 (S579) is a Phosphoserine. K613 bears the N6,N6-dimethyllysine; by EFM2; alternate mark. K613 bears the N6-methyllysine; by EFM2; alternate mark. H699 is modified (diphthamide). 2 positions are modified to phosphothreonine: T713 and T763. K841 is covalently cross-linked (Glycyl lysine isopeptide (Lys-Gly) (interchain with G-Cter in ubiquitin)).

Belongs to the TRAFAC class translation factor GTPase superfamily. Classic translation factor GTPase family. EF-G/EF-2 subfamily. As to quaternary structure, binds to 80S ribosomes. Actively translating ribosomes show mutually exclusive binding of eIF5a (HYP2 or ANB1) and EFT1/eEF2. Interacts with the 40S ribosomal subunit protein RPL9A; the interaction is direct. Interacts with the 60S ribosomal subunit proteins RPL12A; the interaction is direct. Interacts with RPS23A; the interaction is direct. Interacts with 18S rRNA; the interaction is direct. Interacts with 25S rRNA; the interaction is direct. Interacts with RPL0. Interacts with STM1; promoting ribosome inactivation. Post-translationally, (Microbial infection) Diphthamide can be ADP-ribosylated by diphtheria toxin and by Pseudomonas exotoxin A, thus abolishing its function.

It localises to the cytoplasm. The enzyme catalyses GTP + H2O = GDP + phosphate + H(+). It functions in the pathway protein biosynthesis; polypeptide chain elongation. With respect to regulation, inhibited by fusidic acid and sordarin, which prevent the release of eEF2 from the ribosome after the translocation step. While fusidic acid acts on all eukaryotic eEF2, sordarin specifically binds and inhibits only selected fungal eEF2. Catalyzes the GTP-dependent ribosomal translocation step during translation elongation. During this step, the ribosome changes from the pre-translocational (PRE) to the post-translocational (POST) state as the newly formed A-site-bound peptidyl-tRNA and P-site-bound deacylated tRNA move to the P and E sites, respectively. Catalyzes the coordinated movement of the two tRNA molecules, the mRNA and conformational changes in the ribosome. This is Elongation factor 2 (EFT1) from Saccharomyces cerevisiae (strain ATCC 204508 / S288c) (Baker's yeast).